Reading from the N-terminus, the 1099-residue chain is ATP-dependent helicase/deoxyribonuclease subunit B (1099 aa).

The [4Fe-4S] cluster site is built by Cys766, Cys1056, Cys1059, and Cys1065.

The protein belongs to the helicase family. AddB/RexB type 2 subfamily. As to quaternary structure, heterodimer of AddA and RexB. Mg(2+) serves as cofactor. The cofactor is [4Fe-4S] cluster.

The heterodimer acts as both an ATP-dependent DNA helicase and an ATP-dependent, dual-direction single-stranded exonuclease. Recognizes the chi site generating a DNA molecule suitable for the initiation of homologous recombination. This subunit has 5' -&gt; 3' nuclease activity but not helicase activity. This Lactococcus lactis subsp. lactis (strain IL1403) (Streptococcus lactis) protein is ATP-dependent helicase/deoxyribonuclease subunit B.